We begin with the raw amino-acid sequence, 39 residues long: Sarcotoxin-1C (39 aa).

R39 is subject to Arginine amide.

It belongs to the cecropin family.

The protein localises to the secreted. Its function is as follows. Sarcotoxins, which are potent bactericidal proteins, are produced in response to injury. They are cytotoxic to both Gram-positive and Gram-negative bacteria. This is Sarcotoxin-1C from Sarcophaga peregrina (Flesh fly).